The primary structure comprises 634 residues: Kelch-like protein 22 (634 aa).

Ala2 is subject to N-acetylalanine. A BTB domain is found at 50 to 117; the sequence is FDVVLVVEGR…IYTSELELSL (68 aa). 6 Kelch repeats span residues 299-349, 350-399, 400-446, 448-493, 494-544, and 545-593; these read CVVG…VLNN, FVYL…VVGK, YIYA…TLQG, MYIT…ALLD, KLFV…VLDN, and RIYV…VLTL. Thr463 is subject to Phosphothreonine. Tyr466 carries the phosphotyrosine modification. Thr475 carries the phosphothreonine modification. Residues 600–634 form a disordered region; it reads EQPRGTPNRSQADADFASEVMSVSDWEEFDNSSED. Thr605 bears the Phosphothreonine mark. Over residues 624-634 the composition is skewed to acidic residues; sequence DWEEFDNSSED.

As to quaternary structure, component of the BCR(KLHL22) E3 ubiquitin ligase complex, at least composed of CUL3, KLHL22 and RBX1. Interacts with PLK1. Interacts with DEPDC5 (via DEP domain); the interaction depends on amino acid availability. Interacts with YWHAE; required for the nuclear localization of KLHL22 upon amino acid starvation.

Its subcellular location is the cytoplasm. It is found in the cytosol. The protein localises to the cytoskeleton. It localises to the microtubule organizing center. The protein resides in the centrosome. Its subcellular location is the spindle. It is found in the nucleus. The protein localises to the lysosome. The protein operates within protein modification; protein ubiquitination. In terms of biological role, substrate-specific adapter of a BCR (BTB-CUL3-RBX1) E3 ubiquitin ligase complex required for chromosome alignment and localization of PLK1 at kinetochores. The BCR(KLHL22) ubiquitin ligase complex mediates monoubiquitination of PLK1, leading to PLK1 dissociation from phosphoreceptor proteins and subsequent removal from kinetochores, allowing silencing of the spindle assembly checkpoint (SAC) and chromosome segregation. Monoubiquitination of PLK1 does not lead to PLK1 degradation. The BCR(KLHL22) ubiquitin ligase complex is also responsible for the amino acid-stimulated 'Lys-48' polyubiquitination and proteasomal degradation of DEPDC5. Through the degradation of DEPDC5, releases the GATOR1 complex-mediated inhibition of the TORC1 pathway. It is therefore an amino acid-dependent activator within the amino acid-sensing branch of the TORC1 pathway, indirectly regulating different cellular processes including cell growth and autophagy. The chain is Kelch-like protein 22 from Rattus norvegicus (Rat).